The sequence spans 3253 residues: tRNA nuclease CdiA (3253 aa).

The N-terminal stretch at 1–32 (MHQPPVRFPYRLLSYLISTIIAGQPLLPAVGA) is a signal peptide. The tract at residues 36 to 322 (PQNGAGMDKA…AGGNLSVTGT (287 aa)) is two-partner system transport domain (TPS). The tract at residues 351-1384 (GELTAGQNAM…ITIRTGHLLN (1034 aa)) is FHA-1. A receptor binding domain (RBD) region spans residues 1385–1656 (QREGINETKS…DLASGIVEGN (272 aa)). The segment at 1657–1841 (YPLPSGNNGY…LSPKDVTLQN (185 aa)) is YP domain. The periplasmic FHA-1 repeat (pFR) stretch occupies residues 1842-1902 (GSIISGQNVH…GLKAMGDINN (61 aa)). The tract at residues 1944-2548 (TYTGSIASVS…TSKYDSKQTS (605 aa)) is FHA-2. 4 disordered regions span residues 2228–2252 (GSSKTTHDRREAGTTQSQSASTIGS), 2362–2410 (TGDP…GKNR), 2483–2503 (GSEKGNGTEWTETTTDSGKTV), and 2687–2712 (IRDRDNQKQNPADLSRDPAHANDSIS). 3 stretches are compositionally biased toward polar residues: residues 2240-2252 (GTTQSQSASTIGS), 2368-2403 (TGVSLSLTTQKSKSQQHSESDTVSGSTLNAGNNLSV), and 2490-2503 (TEWTETTTDSGKTV). The pretoxin (PT) domain stretch occupies residues 2888 to 2930 (SDLSEEQKQTISTLATVSAGLAGGLTGNSSASAAVGAQSGKNA). The VDNN CT cleavage motif signature appears at 2931–2934 (VDNN). The segment at 2931–3253 (VDNNYLSVSE…TGIVSNFHPK (323 aa)) is C-terminal effector domain (CT).

It in the N-terminal section; belongs to the CdiA toxin family. This sequence in the C-terminal section; belongs to the bacterial EndoU family. In terms of assembly, forms a 1:1 complex with cognate immunity protein CdiI-STECO31. TRNase activity is metal-independent. serves as cofactor. Post-translationally, the CT domain is cleaved upon binding to receptor Tsx on target cells.

Its subcellular location is the secreted. It localises to the target cell. The protein localises to the target cell cytoplasm. Toxic component of a toxin-immunity protein module, which functions as a cellular contact-dependent growth inhibition (CDI) system. CDI modules allow bacteria to communicate with and inhibit the growth of closely related neighboring target bacteria in a contact-dependent fashion (target cell counts decrease 1000- to 10000-fold with this CDI). Uses outer membrane nucleoside transporter Tsx on target cells as a receptor. Gains access to the cytoplasm of target cells by using integral inner membrane protein PTS system glucose-specific EIICB component (ptsG). Targeting of the C-terminal domain (CT) domain (residues 2931-3253) in the absence of immunity protein inhibits cell growth and causes tRNA(UUC-Glu) cleavage; expression of cognate immunity protein CdiI-STECO31 neutralizes growth inhibition leaving tRNA(UUC-Glu) is intact, whereas non-cognate immunity proteins do not confer protection. The CT domain cleaves tRNA; it is most active against tRNA(UUC-Glu), but also has modest activity against tRNA(GUC-Asp), tRNA(UUG-Gln), tRNA(CCC-Gly), tRNA(UCC-Gly), tRNA(GCC-Gly), tRNA(UUU-Lys), tRNA(GGU-Thr) and tRNA(CCA-Trp); tRNA cleavage is inhibited by cognate immunity protein CdiI. Cleavage of tRNA(UUC-Glu) occurs in the anticodon loop between cytosine(37) and 2-methyladenosine(38) (C37-m2A38) and probably also occurs in the anticodon loop of other tRNAs as well. Functionally, the CdiA protein is thought to be exported from the cell through the central lumen of CdiB, the other half of its two-partner system (TPS). The TPS domain probably remains associated with CdiB while the FHA-1 domain forms an extended filament (33 nm long) with the receptor-binding domain (RBD) at its extremity; in the secretion arrested state the C-terminus of the RBD and YP domains form a hairpin-like structure as the FHA-2, PT and CT domains are periplasmic. The YP domain is probably responsible for this arrest at the point where it re-enters the host cell periplasm. Upon binding to a target cell outer membrane receptor (Tsx for this CDI) a signal is transmitted to activate secretion. The filament becomes about 5 nm longer, the rest of CdiA is secreted and the FHA-2 domain becomes stably associated with the target cell's outer membrane where it facilitates entry of the toxic CT domain into the target cell periplasm. From there the toxic CT domain is cleaved and gains access to the target cell cytoplasm via an inner membrane protein (PTS system glucose-specific EIICB component, ptsG for this CDI). The protein is tRNA nuclease CdiA of Escherichia coli (strain STEC_O31).